The sequence spans 250 residues: Ribonuclease HII (250 aa).

The region spanning 66 to 250 (QLVAGVDEVG…TFAPVSDFFK (185 aa)) is the RNase H type-2 domain. 3 residues coordinate a divalent metal cation: Asp-72, Glu-73, and Asp-164.

Belongs to the RNase HII family. The cofactor is Mn(2+). Requires Mg(2+) as cofactor.

Its subcellular location is the cytoplasm. The enzyme catalyses Endonucleolytic cleavage to 5'-phosphomonoester.. Functionally, endonuclease that specifically degrades the RNA of RNA-DNA hybrids. The polypeptide is Ribonuclease HII (Lactobacillus acidophilus (strain ATCC 700396 / NCK56 / N2 / NCFM)).